Consider the following 220-residue polypeptide: MKTGIVTTLIALCLPVSVFATTLRLSTDVDLLVLDGKKVSSSLLRGADSIELDNGPHQLVFRVEKTIHLSNSEERLYISPPLVVSFNTQLINQVNFRLPRLENEREANHFDAAPRLELLDGDATPIPVKLDILAITSTAKTIDYEVEVERYNKSAKRASLPQFATMMADDSTLLSGVSELDAIPPQSQVLTEQRLKYWFKLADPQTRNTFLQWAEKQPSS.

The first 20 residues, 1 to 20 (MKTGIVTTLIALCLPVSVFA), serve as a signal peptide directing secretion.

Belongs to the UPF0319 family.

The sequence is that of UPF0319 protein YccT from Escherichia coli O139:H28 (strain E24377A / ETEC).